A 958-amino-acid polypeptide reads, in one-letter code: Dermatan-sulfate epimerase (958 aa).

A signal peptide spans Met-1 to Ala-22. Residues Cys-23–Arg-902 lie on the Lumenal side of the membrane. The N-linked (GlcNAc...) asparagine glycan is linked to Asn-183. His-205 functions as the Proton donor in the catalytic mechanism. The active site involves Tyr-261. 2 N-linked (GlcNAc...) asparagine glycosylation sites follow: Asn-336 and Asn-411. Residues His-452 and Glu-470 each coordinate Mn(2+). Tyr-473 is an active-site residue. Asn-481 lines the Mn(2+) pocket. N-linked (GlcNAc...) asparagine glycans are attached at residues Asn-642 and Asn-648. Residues Leu-903–Phe-923 traverse the membrane as a helical segment. The Cytoplasmic segment spans residues Gln-924–Arg-933. Residues Cys-934 to Ser-954 form a helical membrane-spanning segment. Residues Gln-955–Cys-958 lie on the Lumenal side of the membrane.

The protein belongs to the dermatan-sulfate isomerase family. The cofactor is Mn(2+). In terms of processing, N-glycosylated. Glycosylation is important for enzymatic activity.

The protein localises to the endoplasmic reticulum membrane. Its subcellular location is the golgi apparatus membrane. It is found in the cytoplasmic vesicle membrane. It localises to the microsome membrane. It carries out the reaction chondroitin 4'-sulfate = dermatan 4'-sulfate. The protein operates within glycan metabolism; chondroitin sulfate biosynthesis. It participates in glycan metabolism; heparan sulfate biosynthesis. In terms of biological role, converts D-glucuronic acid to L-iduronic acid (IdoUA) residues. Plays an important role in the biosynthesis of the glycosaminoglycan/mucopolysaccharide dermatan sulfate. The protein is Dermatan-sulfate epimerase (DSE) of Bos taurus (Bovine).